Reading from the N-terminus, the 585-residue chain is Cytidine monophosphate-N-acetylneuraminic acid hydroxylase (585 aa).

A Rieske domain is found at 9–107 (LSPVEVANLK…VEMDENNRLL (99 aa)). [2Fe-2S] cluster-binding residues include Cys-49, His-51, Cys-70, and His-73.

This sequence belongs to the CMP-Neu5Ac hydroxylase family. [2Fe-2S] cluster is required as a cofactor.

It localises to the cytoplasm. The catalysed reaction is CMP-N-acetyl-beta-neuraminate + 2 Fe(II)-[cytochrome b5] + O2 + 2 H(+) = CMP-N-glycoloyl-beta-neuraminate + 2 Fe(III)-[cytochrome b5] + H2O. It functions in the pathway amino-sugar metabolism; N-acetylneuraminate metabolism. Its function is as follows. Sialic acids are components of carbohydrate chains of glycoconjugates and are involved in cell-cell recognition and cell-pathogen interactions. Catalyzes the conversion of CMP-N-acetylneuraminic acid (CMP-Neu5Ac) into its hydroxylated derivative CMP-N-glycolylneuraminic acid (CMP-Neu5Gc), a sialic acid abundantly expressed at the surface of many cells. This chain is Cytidine monophosphate-N-acetylneuraminic acid hydroxylase (CMAH), found in Pongo pygmaeus (Bornean orangutan).